Here is a 203-residue protein sequence, read N- to C-terminus: Superoxide dismutase [Mn] (203 aa).

4 residues coordinate Mn(2+): histidine 27, histidine 81, aspartate 164, and histidine 168.

This sequence belongs to the iron/manganese superoxide dismutase family. As to quaternary structure, homodimer. Requires Mn(2+) as cofactor.

The enzyme catalyses 2 superoxide + 2 H(+) = H2O2 + O2. Its function is as follows. Destroys superoxide anion radicals which are normally produced within the cells and which are toxic to biological systems. This chain is Superoxide dismutase [Mn] (sodA), found in Pseudomonas putida (Arthrobacter siderocapsulatus).